The primary structure comprises 252 residues: Imidazole glycerol phosphate synthase subunit HisF (252 aa).

Catalysis depends on residues D11 and D130.

The protein belongs to the HisA/HisF family. In terms of assembly, heterodimer of HisH and HisF.

The protein localises to the cytoplasm. It carries out the reaction 5-[(5-phospho-1-deoxy-D-ribulos-1-ylimino)methylamino]-1-(5-phospho-beta-D-ribosyl)imidazole-4-carboxamide + L-glutamine = D-erythro-1-(imidazol-4-yl)glycerol 3-phosphate + 5-amino-1-(5-phospho-beta-D-ribosyl)imidazole-4-carboxamide + L-glutamate + H(+). The protein operates within amino-acid biosynthesis; L-histidine biosynthesis; L-histidine from 5-phospho-alpha-D-ribose 1-diphosphate: step 5/9. IGPS catalyzes the conversion of PRFAR and glutamine to IGP, AICAR and glutamate. The HisF subunit catalyzes the cyclization activity that produces IGP and AICAR from PRFAR using the ammonia provided by the HisH subunit. In Staphylococcus epidermidis (strain ATCC 35984 / DSM 28319 / BCRC 17069 / CCUG 31568 / BM 3577 / RP62A), this protein is Imidazole glycerol phosphate synthase subunit HisF.